A 137-amino-acid polypeptide reads, in one-letter code: Small ribosomal subunit protein uS12 (137 aa).

2 disordered regions span residues 1–21 and 36–57; these read MPTI…KSDS and TKLS…TPKK. The residue at position 102 (aspartate 102) is a 3-methylthioaspartic acid.

The protein belongs to the universal ribosomal protein uS12 family. As to quaternary structure, part of the 30S ribosomal subunit. Contacts proteins S8 and S17. May interact with IF1 in the 30S initiation complex.

Functionally, with S4 and S5 plays an important role in translational accuracy. Interacts with and stabilizes bases of the 16S rRNA that are involved in tRNA selection in the A site and with the mRNA backbone. Located at the interface of the 30S and 50S subunits, it traverses the body of the 30S subunit contacting proteins on the other side and probably holding the rRNA structure together. The combined cluster of proteins S8, S12 and S17 appears to hold together the shoulder and platform of the 30S subunit. The protein is Small ribosomal subunit protein uS12 of Streptococcus agalactiae serotype Ia (strain ATCC 27591 / A909 / CDC SS700).